Here is a 331-residue protein sequence, read N- to C-terminus: Proline-rich protein 33 (331 aa).

Disordered stretches follow at residues 1–112 (MGPQ…SVPR), 128–185 (SLES…PKVA), and 204–247 (APEP…APAS). Over residues 94–105 (PEEPPVPRPPPG) the composition is skewed to pro residues. The segment covering 149–169 (PPMAGPAAEAERVSSPAWASS) has biased composition (low complexity). The span at 170–185 (PTPPSGPHPCPVPKVA) shows a compositional bias: pro residues. Residues 217-238 (EPEVPTPTEQEVPAPTEQEVPA) are compositionally biased toward low complexity.

In Homo sapiens (Human), this protein is Proline-rich protein 33 (PRR33).